A 286-amino-acid polypeptide reads, in one-letter code: 4-diphosphocytidyl-2-C-methyl-D-erythritol kinase (286 aa).

Residue Lys-10 is part of the active site. Residue 100–110 (PMGSGLGGGSS) coordinates ATP. Asp-142 is a catalytic residue.

It belongs to the GHMP kinase family. IspE subfamily. As to quaternary structure, homodimer.

It carries out the reaction 4-CDP-2-C-methyl-D-erythritol + ATP = 4-CDP-2-C-methyl-D-erythritol 2-phosphate + ADP + H(+). It functions in the pathway isoprenoid biosynthesis; isopentenyl diphosphate biosynthesis via DXP pathway; isopentenyl diphosphate from 1-deoxy-D-xylulose 5-phosphate: step 3/6. Catalyzes the phosphorylation of the position 2 hydroxy group of 4-diphosphocytidyl-2C-methyl-D-erythritol. The sequence is that of 4-diphosphocytidyl-2-C-methyl-D-erythritol kinase from Buchnera aphidicola subsp. Acyrthosiphon pisum (strain APS) (Acyrthosiphon pisum symbiotic bacterium).